The chain runs to 302 residues: NAD kinase 1 (302 aa).

D67 serves as the catalytic Proton acceptor. NAD(+) contacts are provided by residues D67–G68, R72, N148–D149, K178, and D180.

Belongs to the NAD kinase family. A divalent metal cation is required as a cofactor.

It localises to the cytoplasm. The enzyme catalyses NAD(+) + ATP = ADP + NADP(+) + H(+). Functionally, involved in the regulation of the intracellular balance of NAD and NADP, and is a key enzyme in the biosynthesis of NADP. Catalyzes specifically the phosphorylation on 2'-hydroxyl of the adenosine moiety of NAD to yield NADP. The chain is NAD kinase 1 from Prochlorococcus marinus (strain NATL2A).